The following is a 212-amino-acid chain: Protein FAM177A1 (212 aa).

Met1 carries the N-acetylmethionine modification. Over residues Met1–Gly11 the composition is skewed to basic and acidic residues. A disordered region spans residues Met1 to Ser33. The segment covering Ala13–Ala29 has biased composition (low complexity). Residue Ser69 is modified to Phosphoserine. Thr70 bears the Phosphothreonine mark. Residues Ile135 to Val172 are a coiled coil. Positions Glu146–Glu179 are disordered. The segment covering Gln161 to Glu179 has biased composition (polar residues).

It belongs to the FAM177 family.

The chain is Protein FAM177A1 (FAM177A1) from Bos taurus (Bovine).